A 392-amino-acid chain; its full sequence is Putative pectate lyase 21 (392 aa).

A signal peptide spans 1–21; sequence MSIVCTFFLFLLNTSFAFAFA. An N-linked (GlcNAc...) asparagine glycan is attached at Asn-38. Ca(2+) is bound by residues Asp-189, Asp-213, and Asp-217. Residue Asn-220 is glycosylated (N-linked (GlcNAc...) asparagine). Arg-269 is an active-site residue.

Belongs to the polysaccharide lyase 1 family. It depends on Ca(2+) as a cofactor.

It carries out the reaction Eliminative cleavage of (1-&gt;4)-alpha-D-galacturonan to give oligosaccharides with 4-deoxy-alpha-D-galact-4-enuronosyl groups at their non-reducing ends.. The protein operates within glycan metabolism; pectin degradation; 2-dehydro-3-deoxy-D-gluconate from pectin: step 2/5. This Arabidopsis thaliana (Mouse-ear cress) protein is Putative pectate lyase 21.